The chain runs to 106 residues: UPF0145 protein VV2_1464 (106 aa).

Belongs to the UPF0145 family.

In Vibrio vulnificus (strain CMCP6), this protein is UPF0145 protein VV2_1464.